Consider the following 626-residue polypeptide: DNA-directed RNA polymerase subunit beta C-terminal section (626 aa).

The tract at residues 287-307 (NTKSKNTGKGSKPPRASKAQN) is disordered.

It belongs to the RNA polymerase beta chain family. As to quaternary structure, in plastids the minimal PEP RNA polymerase catalytic core is composed of four subunits: alpha, beta, beta', and beta''. When a (nuclear-encoded) sigma factor is associated with the core the holoenzyme is formed, which can initiate transcription.

It is found in the plastid. The protein resides in the chloroplast. The enzyme catalyses RNA(n) + a ribonucleoside 5'-triphosphate = RNA(n+1) + diphosphate. In terms of biological role, DNA-dependent RNA polymerase catalyzes the transcription of DNA into RNA using the four ribonucleoside triphosphates as substrates. The polypeptide is DNA-directed RNA polymerase subunit beta C-terminal section (rpoB2) (Chlamydomonas reinhardtii (Chlamydomonas smithii)).